A 2636-amino-acid polypeptide reads, in one-letter code: Ankyrin repeat and KH domain-containing protein CBG24701 (2636 aa).

ANK repeat units follow at residues 252-281 (SRITPLMEAAASSSEMIVELLLDYGMDPNA), 286-317 (NCNTALIYAAATDDRDMVEVILEHEGPHKVDV), 361-390 (NDNSPLIFAAMKGFLDIATVILDYQDKNQQ), 435-464 (NLPSPMMLACAGGFPELVEILLAAGARIDE), 468-500 (HKNTCLIEACDGVSGDQVSVVRMLLNRHADVNA), 505-534 (SGDTPMSLAARHGNIAIMKMLYEKGADLTT), 536-564 (KITPIVEASIETHLECVQFILAHCKTIPQ), 566-595 (QLSRALFAAAEGGCLKIVEELVRAGADLNF), 598-627 (DERTAIMKAARFNHFDIVQYLVYKGASVNF), 632-661 (NDATALSLACTYGNMDIAQFLIRNGADPML), and 665-695 (DGVNCFMEAAKHGSFDLMKLLVEFTKGNMDL). Disordered regions lie at residues 994–1030 (PIDAHQSNPPPAQQTGPKTTSLTTPQPDESNGATTIE), 1172–1191 (KSNRDKGSQQLKAAEQKKGK), and 1230–1268 (NNTQVQQQQGQQQQGQLRRTHSEGDGTERAKARSNVIDK). Over residues 1006–1030 (QQTGPKTTSLTTPQPDESNGATTIE) the composition is skewed to polar residues. Low complexity predominate over residues 1233 to 1245 (QVQQQQGQQQQGQ). Basic and acidic residues predominate over residues 1249-1260 (THSEGDGTERAK). 10 ANK repeats span residues 1273–1302 (TLETPLSIACSNGHREVVELLLKEGANIEH), 1306–1335 (KGFTPLIIAATYGHAPIVEVLLKNHAAIEA), 1340–1369 (TKDTALSLACTAGRKDVVEMLLAHGANKEH), 1373–1402 (SDYTPLSLASSSGFLDIVNLLLTAGSEINS), 1408–1437 (LGISPLMLAAMNGHKETTKVLLEKGSDINA), 1447–1476 (YRNTALTLASFQGRFEVVKLLLCYNANVEH), 1480–1509 (TGLTPLMECASGGYVDVGNLLIENGADPNA), 1515–1546 (TKDTALTIAAEKGHEKFVQMLLDNDVIYDIRN), 1548–1577 (KGCSALWLACNGGHLGTAQALVFKGADTDM), and 1581–1610 (RKMSPMVAAFRKGHIEIIKFLVGHAKQFPN). Positions 1638–1696 (RNAKKAQAETAEETANRLLQLIDDEKERDINKKQKIKDKKKQKKEAKKKFQAEQEQLSA) form a coiled coil. The segment at 1669-1857 (KKQKIKDKKK…SSISERQHSW (189 aa)) is disordered. Residues 1670–1686 (KQKIKDKKKQKKEAKKK) are compositionally biased toward basic residues. A compositionally biased stretch (pro residues) spans 1698–1708 (PSKPEPVVAPE). Acidic residues predominate over residues 1709-1722 (PEPEPETEPVEEPA). Basic and acidic residues predominate over residues 1811 to 1829 (DWQKAGKEGKKVRPKREGR). Residues 1832 to 1851 (APSSAGSSQAKHRSNTSSIS) are compositionally biased toward polar residues. Residues 1864 to 1929 (VKAYEFTVPG…DVVSMAVNII (66 aa)) form the KH domain. Disordered regions lie at residues 1980-2182 (SASI…SLPS), 2196-2221 (FKPTAPAPAPVTSIAPSTSTATSTAS), 2269-2292 (NSTASSLNTATTKNDTSDWGSNDF), 2301-2320 (SNQKTSSAPQQPVSSVNSQL), 2352-2417 (SQSS…TQQQ), 2444-2465 (MHRQENSSSVPGPSQPSANPYY), and 2539-2636 (GMMQ…SSRM). The span at 1994–2008 (SQCNRSSKSHGNQAT) shows a compositional bias: polar residues. Low complexity predominate over residues 2025-2045 (TPPTQTQTKQQPTPSPQVQQP). Positions 2057 to 2083 (SLAQSSVPQATENVTKPTQTPPASVQQ) are enriched in polar residues. Composition is skewed to low complexity over residues 2099 to 2119 (QVVQPVPPVHQHTPVPQQRPQ) and 2139 to 2148 (QQHMQQIQQQ). The span at 2167–2179 (PGPPVQPQTPPQS) shows a compositional bias: pro residues. Residues 2269-2280 (NSTASSLNTATT) are compositionally biased toward low complexity. Over residues 2281 to 2292 (KNDTSDWGSNDF) the composition is skewed to polar residues. Low complexity-rich tracts occupy residues 2361–2373 (QHQQQQQRIMQDP) and 2391–2417 (PQQFQQPQFSSQSHPSQSSMMPSTQQQ). Polar residues-rich tracts occupy residues 2449–2465 (NSSSVPGPSQPSANPYY), 2565–2574 (RSASGSSQNR), and 2583–2595 (QQPQPFSQLTQAD). Low complexity predominate over residues 2599 to 2615 (RLLLQQQQQQRSSQQQQ). Polar residues predominate over residues 2616 to 2636 (NPTNQGLPQKWSNTWNSSSRM).

Belongs to the mask family.

The protein localises to the cytoplasm. The protein is Ankyrin repeat and KH domain-containing protein CBG24701 of Caenorhabditis briggsae.